The chain runs to 120 residues: NAD(P)H-quinone oxidoreductase subunit 3, chloroplastic (120 aa).

3 consecutive transmembrane segments (helical) span residues 9-29 (IFWAFLIISSLIPILAFLISG), 64-84 (MFALIFVVFDVETVFLYPWAM), and 88-108 (VLGVSVFLEAFLFVLILIVGS).

This sequence belongs to the complex I subunit 3 family. As to quaternary structure, NDH is composed of at least 16 different subunits, 5 of which are encoded in the nucleus.

Its subcellular location is the plastid. It localises to the chloroplast thylakoid membrane. It catalyses the reaction a plastoquinone + NADH + (n+1) H(+)(in) = a plastoquinol + NAD(+) + n H(+)(out). The enzyme catalyses a plastoquinone + NADPH + (n+1) H(+)(in) = a plastoquinol + NADP(+) + n H(+)(out). In terms of biological role, NDH shuttles electrons from NAD(P)H:plastoquinone, via FMN and iron-sulfur (Fe-S) centers, to quinones in the photosynthetic chain and possibly in a chloroplast respiratory chain. The immediate electron acceptor for the enzyme in this species is believed to be plastoquinone. Couples the redox reaction to proton translocation, and thus conserves the redox energy in a proton gradient. This chain is NAD(P)H-quinone oxidoreductase subunit 3, chloroplastic, found in Phaseolus vulgaris (Kidney bean).